Consider the following 188-residue polypeptide: dCTP deaminase (188 aa).

Residues 111-116, 135-137, glutamine 156, tyrosine 170, and glutamine 180 each bind dCTP; these read KSTYAR and TLE. The Proton donor/acceptor role is filled by glutamate 137.

It belongs to the dCTP deaminase family. As to quaternary structure, homotrimer.

The enzyme catalyses dCTP + H2O + H(+) = dUTP + NH4(+). Its pathway is pyrimidine metabolism; dUMP biosynthesis; dUMP from dCTP (dUTP route): step 1/2. Catalyzes the deamination of dCTP to dUTP. This is dCTP deaminase from Pseudomonas fluorescens (strain SBW25).